A 1012-amino-acid polypeptide reads, in one-letter code: RNA-binding protein 26 (1012 aa).

Residue Lys-94 forms a Glycyl lysine isopeptide (Lys-Gly) (interchain with G-Cter in SUMO2) linkage. Residues 98–127 are a coiled coil; it reads LQHQEKDIKKEELTKEEEREKKFSRRLNHS. Residue Lys-106 forms a Glycyl lysine isopeptide (Lys-Gly) (interchain with G-Cter in SUMO1); alternate linkage. Lys-106 participates in a covalent cross-link: Glycyl lysine isopeptide (Lys-Gly) (interchain with G-Cter in SUMO2); alternate. Residues 106–118 show a composition bias toward basic and acidic residues; sequence KKEELTKEEEREK. The interval 106–236 is disordered; the sequence is KKEELTKEEE…PLENNYTPVS (131 aa). Ser-127 carries the post-translational modification Phosphoserine. Positions 134–168 are enriched in basic and acidic residues; sequence RYRDNRSRDERKKDDRSRKRDYDRNPPRRDSYRDR. The span at 169-186 shows a compositional bias: basic residues; sequence YNRRRGRSRSYSRSRSRS. 2 stretches are compositionally biased toward basic and acidic residues: residues 187 to 201 and 209 to 227; these read WSKE…DRSR and RSRE…RTDP. The C3H1-type zinc finger occupies 288–316; sequence PMPKKRCRDYDEKGFCMRGDMCPFDHGSD. Pro residues predominate over residues 334–388; the sequence is QPPVVEGPPPPGLPPPPPILTPPPVNLRPPVPPPGPLPPSLPPVTGPPPPLPPLQ. 2 disordered regions span residues 334-404 and 465-520; these read QPPV…SSVP and IGLT…NFNR. The segment covering 394-404 has biased composition (low complexity); the sequence is APPNSATSSVP. At Ser-501 the chain carries Phosphoserine. N6-acetyllysine is present on Lys-515. At Ser-523 the chain carries Phosphoserine. The 75-residue stretch at 537-611 folds into the RRM 1 domain; it reads TKLELRKVPP…RFIKVYWHRE (75 aa). Residue Ser-621 is modified to Phosphoserine. The disordered stretch occupies residues 647 to 667; it reads PVPSATTEPAEAQSATSELPQ. Coiled-coil stretches lie at residues 724-800 and 828-852; these read DNNE…KSTS and KKMQ…EAAK. The disordered stretch occupies residues 858-889; that stretch reads SGRGRGIHTRGRGTAHGRGRGRGRGRGVPGHA. A compositionally biased stretch (basic residues) spans 862 to 882; sequence RGIHTRGRGTAHGRGRGRGRG. The RRM 2 domain maps to 896 to 965; it reads RALEISAFTE…QDLKLAWNKP (70 aa). Residues 970-1012 are disordered; that stretch reads SAVDTEEAEPDEEEFQEESLVDDSLLQDDDEEEEDNESRSWRR. Acidic residues predominate over residues 973–1005; it reads DTEEAEPDEEEFQEESLVDDSLLQDDDEEEEDN.

In terms of tissue distribution, expressed in testis and ovary.

Its function is as follows. May be involved in the turnover of nuclear polyadenylated (pA+) RNA. The chain is RNA-binding protein 26 from Mus musculus (Mouse).